Here is a 199-residue protein sequence, read N- to C-terminus: Protein ASYMMETRIC LEAVES 2 (199 aa).

Residues Ser8–Leu109 enclose the LOB domain.

It belongs to the LOB domain-containing protein family. As to quaternary structure, homo- and heterodimer with AS1. Interacts with AS1. Part of the AS1 repressor complex composed of AS1, LBD6/AS2 and HDA6. Interacts with LFR. In terms of tissue distribution, expressed in young shoots, roots, stems, leaves, flowers and adaxial domains of cotyledonary and leaves primordia.

It localises to the nucleus. Negative regulator of cell proliferation in the adaxial side of leaves. Regulates the formation of a symmetric lamina and the establishment of venation. Positively regulates LATERAL ORGAN BOUNDARIES (LOB) within the shoot apex, and the class III HD-ZIP genes REV, PHB, and PHV. Interacts directly with ASYMMETRIC LEAVES 1 (AS1) to repress the knox homeobox genes KNAT1, KNAT2, and KNAT6 and the abaxial determinants ARF3, KAN2 and YAB5. May act in parallel with the RDR6-SGS3-AGO7 pathway, an endogenous RNA silencing pathway, to regulate the leaf morphogenesis. Required for the binding of AS1 to the KNOX genes. Involved in leaf polarity establishment by functioning cooperatively with RH10 or RID2 to repress abaxial genes ARF3, ARF4, KAN1, KAN2, YAB1 and YAB5, and the knox homeobox genes KNAT1, KNAT2, KNAT6, and STM to promote adaxial development in leaf primordia at shoot apical meristems at high temperatures. The chain is Protein ASYMMETRIC LEAVES 2 from Arabidopsis thaliana (Mouse-ear cress).